Consider the following 546-residue polypeptide: CTP synthase (546 aa).

An amidoligase domain region spans residues Met1 to Ile266. Ser14 serves as a coordination point for CTP. Ser14 serves as a coordination point for UTP. Residues Ser15–Ile20 and Asp72 contribute to the ATP site. Mg(2+) contacts are provided by Asp72 and Glu140. CTP is bound by residues Asp147 to Glu149, Lys187 to Gln192, and Lys223. UTP contacts are provided by residues Lys187–Gln192 and Lys223. Position 239-241 (Lys239–Val241) interacts with ATP. The 252-residue stretch at Thr291–Arg542 folds into the Glutamine amidotransferase type-1 domain. An L-glutamine-binding site is contributed by Gly352. The Nucleophile; for glutamine hydrolysis role is filled by Cys379. Residues Leu380–Gln383, Glu403, and Arg470 each bind L-glutamine. Active-site residues include His515 and Glu517.

This sequence belongs to the CTP synthase family. Homotetramer.

It carries out the reaction UTP + L-glutamine + ATP + H2O = CTP + L-glutamate + ADP + phosphate + 2 H(+). The enzyme catalyses L-glutamine + H2O = L-glutamate + NH4(+). It catalyses the reaction UTP + NH4(+) + ATP = CTP + ADP + phosphate + 2 H(+). Its pathway is pyrimidine metabolism; CTP biosynthesis via de novo pathway; CTP from UDP: step 2/2. Allosterically activated by GTP, when glutamine is the substrate; GTP has no effect on the reaction when ammonia is the substrate. The allosteric effector GTP functions by stabilizing the protein conformation that binds the tetrahedral intermediate(s) formed during glutamine hydrolysis. Inhibited by the product CTP, via allosteric rather than competitive inhibition. Catalyzes the ATP-dependent amination of UTP to CTP with either L-glutamine or ammonia as the source of nitrogen. Regulates intracellular CTP levels through interactions with the four ribonucleotide triphosphates. This chain is CTP synthase, found in Shewanella pealeana (strain ATCC 700345 / ANG-SQ1).